Here is a 467-residue protein sequence, read N- to C-terminus: tRNA-2-methylthio-N(6)-dimethylallyladenosine synthase (467 aa).

The 117-residue stretch at Pro2 to Lys118 folds into the MTTase N-terminal domain. [4Fe-4S] cluster-binding residues include Cys11, Cys47, Cys81, Cys159, Cys163, and Cys166. Positions Thr145–Glu379 constitute a Radical SAM core domain. The region spanning Gln382–Ile445 is the TRAM domain.

This sequence belongs to the methylthiotransferase family. MiaB subfamily. As to quaternary structure, monomer. The cofactor is [4Fe-4S] cluster.

It is found in the cytoplasm. It carries out the reaction N(6)-dimethylallyladenosine(37) in tRNA + (sulfur carrier)-SH + AH2 + 2 S-adenosyl-L-methionine = 2-methylsulfanyl-N(6)-dimethylallyladenosine(37) in tRNA + (sulfur carrier)-H + 5'-deoxyadenosine + L-methionine + A + S-adenosyl-L-homocysteine + 2 H(+). Catalyzes the methylthiolation of N6-(dimethylallyl)adenosine (i(6)A), leading to the formation of 2-methylthio-N6-(dimethylallyl)adenosine (ms(2)i(6)A) at position 37 in tRNAs that read codons beginning with uridine. This is tRNA-2-methylthio-N(6)-dimethylallyladenosine synthase from Methylacidiphilum infernorum (isolate V4) (Methylokorus infernorum (strain V4)).